A 105-amino-acid polypeptide reads, in one-letter code: U-scoloptoxin(16)-Sm4a (105 aa).

The N-terminal stretch at 1–22 (MWALTVFVTILAAAIPITGVTG) is a signal peptide.

The protein belongs to the scoloptoxin-16 family. In terms of processing, contains 4 disulfide bonds. Expressed by the venom gland.

The protein localises to the secreted. The polypeptide is U-scoloptoxin(16)-Sm4a (Scolopendra morsitans (Tanzanian blue ringleg centipede)).